The following is a 686-amino-acid chain: Hexamerin 70c (686 aa).

A signal peptide spans 1 to 19; that stretch reads MLSKVVLLVALAAICGAQG. Residues 32–155 enclose the Hemocyanin N-terminal domain; that stretch reads FLHKQKKIFD…IAVLYRPDTK (124 aa). In terms of domain architecture, Hemocyanin middle spans 161–431; the sequence is AIYEIYPNYF…MLYQNILSYF (271 aa). N-linked (GlcNAc...) asparagine glycosylation is found at asparagine 205 and asparagine 662. The Hemocyanin C-terminal domain maps to 440–676; the sequence is QYSQSELQMP…NMYFKDVFIY (237 aa).

It belongs to the hemocyanin/hexamerin family. Probable homohexamer. As to expression, expressed in the fat body and secreted into the hemolymph (at protein level). Present in trophocytes and oenocytes of the fat body (at protein level). Not expressed in ovary or testis.

The protein resides in the secreted. It is found in the nucleus. Its subcellular location is the cytoplasm. The protein localises to the cytoplasmic granule. Storage protein that may function as a nutrient supply to compensate for lack of dietary proteins during metamorphosis and egg production. This is Hexamerin 70c from Apis mellifera (Honeybee).